The primary structure comprises 128 residues: uncharacterized protein (128 aa).

Residues 8 to 28 traverse the membrane as a helical segment; the sequence is YQAIYLIFAGFTVFGLLLHFY.

It is found in the membrane. This is an uncharacterized protein from Haemophilus influenzae (strain ATCC 51907 / DSM 11121 / KW20 / Rd).